The sequence spans 372 residues: Probable leucine aminopeptidase MCYG_03459 (372 aa).

The first 18 residues, Met1–Ala18, serve as a signal peptide directing secretion. Asn95 carries N-linked (GlcNAc...) asparagine glycosylation. Zn(2+)-binding residues include His175 and Asp194. N-linked (GlcNAc...) asparagine glycans are attached at residues Asn195 and Asn219. Zn(2+) is bound by residues Glu233 and Asp260. Cysteines 305 and 309 form a disulfide. Residue His338 participates in Zn(2+) binding.

The protein belongs to the peptidase M28 family. M28E subfamily. As to quaternary structure, monomer. Requires Zn(2+) as cofactor.

The protein resides in the secreted. Its function is as follows. Probable extracellular aminopeptidase which contributes to pathogenicity. The sequence is that of Probable leucine aminopeptidase MCYG_03459 from Arthroderma otae (strain ATCC MYA-4605 / CBS 113480) (Microsporum canis).